Consider the following 250-residue polypeptide: MQKKSIIIPALDLIDGNVVRLHQGDYAKQTTYSDNPIEQFASYLAQGAEQLHLVDLTGAKDPAKRQTALIGKIIAETNCQIQVGGGIRTEQDVADLLAVGANRVVIGSTAVKDRAMVKGWFEKYGAEKFVLALDVNIDASGQKIIAISGWQEASGVSLEELIEDYQVVGLQHVLCTDISRDGTLAGSNVNLYREICAKYPKIHFQSSGGIGSLDDIKALKGTGVSGVIVGRALLEGKFNVAEAIECWQNG.

The Proton acceptor role is filled by D12. Residue D134 is the Proton donor of the active site.

Belongs to the HisA/HisF family.

The protein localises to the cytoplasm. The catalysed reaction is 1-(5-phospho-beta-D-ribosyl)-5-[(5-phospho-beta-D-ribosylamino)methylideneamino]imidazole-4-carboxamide = 5-[(5-phospho-1-deoxy-D-ribulos-1-ylimino)methylamino]-1-(5-phospho-beta-D-ribosyl)imidazole-4-carboxamide. Its pathway is amino-acid biosynthesis; L-histidine biosynthesis; L-histidine from 5-phospho-alpha-D-ribose 1-diphosphate: step 4/9. This chain is 1-(5-phosphoribosyl)-5-[(5-phosphoribosylamino)methylideneamino] imidazole-4-carboxamide isomerase, found in Actinobacillus pleuropneumoniae serotype 7 (strain AP76).